Here is a 235-residue protein sequence, read N- to C-terminus: NAD(P)H-hydrate epimerase (235 aa).

The region spanning 18 to 221 is the YjeF N-terminal domain; sequence AAQIDEQLFT…SLVDEHELLM (204 aa). 65–69 lines the (6S)-NADPHX pocket; it reads NNGGD. Positions 66 and 127 each coordinate K(+). Residues 131–137 and Asp160 contribute to the (6S)-NADPHX site; that span reads GFSFHPP. Residue Ser163 coordinates K(+).

The protein belongs to the NnrE/AIBP family. The cofactor is K(+).

It carries out the reaction (6R)-NADHX = (6S)-NADHX. The catalysed reaction is (6R)-NADPHX = (6S)-NADPHX. Functionally, catalyzes the epimerization of the S- and R-forms of NAD(P)HX, a damaged form of NAD(P)H that is a result of enzymatic or heat-dependent hydration. This is a prerequisite for the S-specific NAD(P)H-hydrate dehydratase to allow the repair of both epimers of NAD(P)HX. The sequence is that of NAD(P)H-hydrate epimerase from Caenorhabditis elegans.